The sequence spans 126 residues: Phosphoribosyl-AMP cyclohydrolase (126 aa).

Asp74 contributes to the Mg(2+) binding site. Cys75 is a binding site for Zn(2+). Residues Asp76 and Asp78 each coordinate Mg(2+). Positions 92 and 99 each coordinate Zn(2+).

It belongs to the PRA-CH family. Homodimer. The cofactor is Mg(2+). It depends on Zn(2+) as a cofactor.

It localises to the cytoplasm. The catalysed reaction is 1-(5-phospho-beta-D-ribosyl)-5'-AMP + H2O = 1-(5-phospho-beta-D-ribosyl)-5-[(5-phospho-beta-D-ribosylamino)methylideneamino]imidazole-4-carboxamide. It functions in the pathway amino-acid biosynthesis; L-histidine biosynthesis; L-histidine from 5-phospho-alpha-D-ribose 1-diphosphate: step 3/9. Functionally, catalyzes the hydrolysis of the adenine ring of phosphoribosyl-AMP. The chain is Phosphoribosyl-AMP cyclohydrolase from Geotalea daltonii (strain DSM 22248 / JCM 15807 / FRC-32) (Geobacter daltonii).